Reading from the N-terminus, the 290-residue chain is Ankyrin repeat and SOCS box protein 9 (290 aa).

Met-1 bears the N-acetylmethionine mark. A compositionally biased stretch (basic and acidic residues) spans 1 to 11; that stretch reads MDGEQRGRSDR. The tract at residues 1–20 is disordered; sequence MDGEQRGRSDRPGGSPHLPF. ANK repeat units follow at residues 31 to 60, 64 to 93, 97 to 126, 129 to 158, 162 to 191, and 194 to 223; these read SDWS…PVNI, DHVS…QVNG, DWRT…TPHP, ELAS…NIDY, HLGT…SVNQ, and GLDS…NAQA. The region spanning 236–290 is the SOCS box domain; sequence PLESPLIQIFLQNEGPQSLRQLCRLRIRKCFGIRQHHKISELLLPEDLKRFLLHL.

It belongs to the ankyrin SOCS box (ASB) family. As to quaternary structure, substrate-recognition component of the ECS(ASB9) complex, composed of ASB9, CUL5, ELOB, ELOC and RNF7/RBX2.

The protein localises to the mitochondrion. The protein operates within protein modification; protein ubiquitination. Substrate-recognition component of a cullin-5-RING E3 ubiquitin-protein ligase complex (ECS complex, also named CRL5 complex), which mediates the ubiquitination and subsequent proteasomal degradation of target proteins. The ECS(ASB9) complex catalyzes ubiquitination of creatine kinases CKB and CKMT1A. In Mus musculus (Mouse), this protein is Ankyrin repeat and SOCS box protein 9.